Here is a 352-residue protein sequence, read N- to C-terminus: Protein RecA (352 aa).

67-74 lines the ATP pocket; the sequence is GPESSGKT.

The protein belongs to the RecA family.

It is found in the cytoplasm. Its function is as follows. Can catalyze the hydrolysis of ATP in the presence of single-stranded DNA, the ATP-dependent uptake of single-stranded DNA by duplex DNA, and the ATP-dependent hybridization of homologous single-stranded DNAs. It interacts with LexA causing its activation and leading to its autocatalytic cleavage. This chain is Protein RecA, found in Aggregatibacter actinomycetemcomitans (Actinobacillus actinomycetemcomitans).